A 518-amino-acid polypeptide reads, in one-letter code: Ell-associated factor Eaf (518 aa).

2 stretches are compositionally biased toward polar residues: residues 119 to 128 (KTRSEMTNKP) and 163 to 182 (ENSTMRITSKTKVSTGSRRN). Disordered regions lie at residues 119-216 (KTRS…PAWH) and 241-518 (ALHN…DDDD). Ser-192 is modified (phosphoserine). 2 stretches are compositionally biased toward polar residues: residues 253–265 (ANISGSSTGSSVG) and 274–284 (MGKQRQASSQG). Positions 289-342 (QQQTQRSSPPMQQQQQQQNYGRGGANNNYAQQLHQQQQQQQQQQLQQQQQQMQQ) are enriched in low complexity. Residues 343–355 (RASFSHSNHSNSM) show a composition bias toward polar residues. Positions 368–377 (AAQSMAQAAA) are enriched in low complexity. Positions 397–412 (ESSDSDSGSDSDDSTE) are enriched in acidic residues. Composition is skewed to low complexity over residues 418–428 (HQQQQPPGQLS), 463–476 (QQQQQQHQQQQQQQ), and 500–518 (NDLLQNDLQLSSNSSDDDD).

Belongs to the EAF family.

Its subcellular location is the nucleus. Promotes transcriptional elongation by Su(Tpl)/ELL. Essential for development. The polypeptide is Ell-associated factor Eaf (Drosophila mojavensis (Fruit fly)).